We begin with the raw amino-acid sequence, 522 residues long: Serine/threonine-protein kinase BSK1-2 (522 aa).

The interval 1-54 (MGCCGSSLRVGSHAPEKPPRRARPPPPPPQPHHPRRPSFTLNAHQAAASSSAAS) is disordered. Gly2 is lipidated: N-myristoyl glycine. Residues 79 to 338 (ANIVSESGEK…KLVSILQPLQ (260 aa)) form the Protein kinase domain. ATP is bound by residues 85–93 (SGEKAPNLV) and Lys111. Asp205 (proton acceptor) is an active-site residue.

It belongs to the protein kinase superfamily. Ser/Thr protein kinase family.

It localises to the cell membrane. It catalyses the reaction L-seryl-[protein] + ATP = O-phospho-L-seryl-[protein] + ADP + H(+). It carries out the reaction L-threonyl-[protein] + ATP = O-phospho-L-threonyl-[protein] + ADP + H(+). Its function is as follows. Probable serine/threonine kinase that functions as a positive regulator of plant immunity. May be involved in the regulation of pattern-triggered immunity (PTI). Does not seem to be involved in responses to brassinosteroid (BR) signaling. The protein is Serine/threonine-protein kinase BSK1-2 of Oryza sativa subsp. japonica (Rice).